The sequence spans 75 residues: Xibalbin-13 2 (75 aa).

The signal sequence occupies residues 1 to 27 (MKEANTRRYIYLCLVVVLLSIIITTEA). The propeptide occupies 28–30 (EDD). Intrachain disulfides connect Cys-34-Cys-49, Cys-41-Cys-54, Cys-48-Cys-65, and Cys-56-Cys-63.

Belongs to the xibalbin-13 family. As to expression, expressed by the venom gland and the whole body.

It is found in the secreted. In terms of biological role, probable neurotoxin. Strongly inhibits voltage-gated potassium channels (Kv1.1/KCNA1, Kv1.2/KCNA2, Kv1.3/KCNA3, and Kv1.6/KCNA6, with the highest toxicity against Kv1.1 (85.1% inhibition at 1 uM)) and mildly inhibits sodium channels (Nav1.2/SCN2A, Nav1.4/SCN4A, Nav1.5/SCN5A, Nav1.6/SCN8A, and BgNav). Induces activation of protein kinase A type II (PKA-II) and MAP kinase Erk1/2 in primary nociceptive and non-nociceptive sensory neurons. Does not show cytotoxic activity. Does not have an impact on Ca2+, cAMP, and NO signaling in the cell types analyzed. Does not interfere with the adhesion of leukocytes to endothelial cells. This Xibalbanus tulumensis (Blind cave remipede) protein is Xibalbin-13 2.